Consider the following 250-residue polypeptide: Ubiquinone/menaquinone biosynthesis C-methyltransferase UbiE (250 aa).

S-adenosyl-L-methionine-binding positions include Thr-74, Asp-94, 122–123 (DA), and Ser-139.

The protein belongs to the class I-like SAM-binding methyltransferase superfamily. MenG/UbiE family.

The enzyme catalyses a 2-demethylmenaquinol + S-adenosyl-L-methionine = a menaquinol + S-adenosyl-L-homocysteine + H(+). It catalyses the reaction a 2-methoxy-6-(all-trans-polyprenyl)benzene-1,4-diol + S-adenosyl-L-methionine = a 5-methoxy-2-methyl-3-(all-trans-polyprenyl)benzene-1,4-diol + S-adenosyl-L-homocysteine + H(+). Its pathway is quinol/quinone metabolism; menaquinone biosynthesis; menaquinol from 1,4-dihydroxy-2-naphthoate: step 2/2. It functions in the pathway cofactor biosynthesis; ubiquinone biosynthesis. Functionally, methyltransferase required for the conversion of demethylmenaquinol (DMKH2) to menaquinol (MKH2) and the conversion of 2-polyprenyl-6-methoxy-1,4-benzoquinol (DDMQH2) to 2-polyprenyl-3-methyl-6-methoxy-1,4-benzoquinol (DMQH2). The polypeptide is Ubiquinone/menaquinone biosynthesis C-methyltransferase UbiE (Roseobacter denitrificans (strain ATCC 33942 / OCh 114) (Erythrobacter sp. (strain OCh 114))).